The primary structure comprises 380 residues: Flap endonuclease 1 (380 aa).

Residues 1-104 form an N-domain region; it reads MGIQGLAKLI…GELAKRSERR (104 aa). Symmetric dimethylarginine; by PRMT5 is present on R19. Residue D34 participates in Mg(2+) binding. Residues R47 and R70 each coordinate DNA. K80 bears the N6-acetyllysine mark. D86 contributes to the Mg(2+) binding site. 2 positions are modified to symmetric dimethylarginine; by PRMT5: R100 and R104. Residues 122–253 form an I-domain region; the sequence is EVEKFTKRLV…KRAVDLIQKH (132 aa). Mg(2+) contacts are provided by E158, E160, D179, and D181. Position 158 (E158) interacts with DNA. S187 is subject to Phosphoserine; by CDK2. R192 carries the post-translational modification Symmetric dimethylarginine; by PRMT5. Phosphoserine is present on S197. Positions 231 and 233 each coordinate DNA. D233 contacts Mg(2+). Phosphoserine occurs at positions 255, 293, and 335. The interval 327-380 is disordered; it reads RLSKSRQGSTQGRLDDFFKVTGSLSSAKRKEPEPKGAAKKKAKTGAAGKFKRGK. Residue T336 is modified to Phosphothreonine. An interaction with PCNA region spans residues 336–344; the sequence is TQGRLDDFF. Residues K354, K375, K377, and K380 each carry the N6-acetyllysine modification. Positions 363 to 380 are enriched in basic residues; the sequence is AAKKKAKTGAAGKFKRGK.

This sequence belongs to the XPG/RAD2 endonuclease family. FEN1 subfamily. Interacts with PCNA. Three molecules of FEN1 bind to one PCNA trimer with each molecule binding to one PCNA monomer. PCNA stimulates the nuclease activity without altering cleavage specificity. The C-terminal domain binds EP300; can bind simultaneously to both PCNA and EP300. Interacts with DDX11; this interaction is direct and increases flap endonuclease activity of FEN1. Interacts with WDR4; regulating its endonuclease activity. Interacts with POLB. Mg(2+) is required as a cofactor. In terms of processing, acetylated by EP300. Acetylation inhibits both endonuclease and exonuclease activity. Acetylation also reduces DNA-binding activity but does not affect interaction with PCNA or EP300. Post-translationally, phosphorylation upon DNA damage induces relocalization to the nuclear plasma. Phosphorylation at Ser-187 by CDK2 occurs during late S-phase and results in dissociation from PCNA. Methylation at Arg-192 by PRMT5 impedes Ser-187 phosphorylation and increases interaction with PCNA.

The protein resides in the nucleus. The protein localises to the nucleolus. It is found in the nucleoplasm. It localises to the mitochondrion. Structure-specific nuclease with 5'-flap endonuclease and 5'-3' exonuclease activities involved in DNA replication and repair. During DNA replication, cleaves the 5'-overhanging flap structure that is generated by displacement synthesis when DNA polymerase encounters the 5'-end of a downstream Okazaki fragment. It enters the flap from the 5'-end and then tracks to cleave the flap base, leaving a nick for ligation. Also involved in the long patch base excision repair (LP-BER) pathway, by cleaving within the apurinic/apyrimidinic (AP) site-terminated flap. Acts as a genome stabilization factor that prevents flaps from equilibrating into structures that lead to duplications and deletions. Also possesses 5'-3' exonuclease activity on nicked or gapped double-stranded DNA, and exhibits RNase H activity. Also involved in replication and repair of rDNA and in repairing mitochondrial DNA. The chain is Flap endonuclease 1 from Bos taurus (Bovine).